Consider the following 314-residue polypeptide: Porphobilinogen deaminase (314 aa).

S-(dipyrrolylmethanemethyl)cysteine is present on Cys-234.

Belongs to the HMBS family. In terms of assembly, monomer. Dipyrromethane serves as cofactor.

It catalyses the reaction 4 porphobilinogen + H2O = hydroxymethylbilane + 4 NH4(+). It participates in porphyrin-containing compound metabolism; protoporphyrin-IX biosynthesis; coproporphyrinogen-III from 5-aminolevulinate: step 2/4. Tetrapolymerization of the monopyrrole PBG into the hydroxymethylbilane pre-uroporphyrinogen in several discrete steps. The polypeptide is Porphobilinogen deaminase (Mycobacterium ulcerans (strain Agy99)).